A 545-amino-acid polypeptide reads, in one-letter code: Delta 8-(E)-sphingolipid desaturase (545 aa).

The region spanning 1–82 is the Cytochrome b5 heme-binding domain; sequence MASHTKDALL…MLAFQIGRIQ (82 aa). Heme contacts are provided by histidine 42 and histidine 65. The interval 97–124 is disordered; that stretch reads FRHYDENADSEEDDTSGQSQPPSPIFDA. The helical transmembrane segment at 227–247 threads the bilayer; the sequence is LGWYSVSAVFLGCFWHQLVFS. Residues 249–253 carry the Histidine box-1 motif; it reads HDAGH. A helical membrane pass occupies residues 262 to 282; it reads VDSIIGILIADFLGGLSLGWW. The short motif at 286–290 is the Histidine box-2 element; the sequence is HNVHH. The next 2 membrane-spanning stretches (helical) occupy residues 382-402 and 408-428; these read IAGQIFFWIWFGYGVLYCSIP and LSFLFISHMVTAPVHVQITLS. The Histidine box-3 signature appears at 470–474; that stretch reads QAIHH.

Belongs to the fatty acid desaturase type 1 family.

The protein resides in the membrane. The enzyme catalyses an N-acylsphing-4-enine + 2 Fe(II)-[cytochrome b5] + O2 + 2 H(+) = a (4E,8E)-4-sphinga-4,8-dienine ceramide + 2 Fe(III)-[cytochrome b5] + 2 H2O. The protein operates within lipid metabolism; sphingolipid metabolism. Functionally, delta(8)-fatty-acid desaturase which introduces a double bond at the 8-position in the long-chain base (LCB) of ceramides. Required for the formation of the di-unsaturated sphingoid base (E,E)-sphinga-4,8-dienine during glucosylceramide (GluCer) biosynthesis. Plays an important role in conidiation. The protein is Delta 8-(E)-sphingolipid desaturase of Emericella nidulans (strain FGSC A4 / ATCC 38163 / CBS 112.46 / NRRL 194 / M139) (Aspergillus nidulans).